The following is a 168-amino-acid chain: Pheromone-binding protein (168 aa).

A signal peptide spans 1–26 (MNKTTTKMKVAVVAIVVYLAVGNVDS). Intrachain disulfides connect Cys45–Cys80, Cys76–Cys134, and Cys123–Cys143.

This sequence belongs to the PBP/GOBP family. As to quaternary structure, homodimer. Antenna.

Its function is as follows. This major soluble protein in olfactory sensilla of male moths might serve to solubilize the extremely hydrophobic pheromone molecules and to transport pheromone through the aqueous lymph to receptors located on olfactory cilia. PBP is also found in sensilla from female M.sexta antennae. This chain is Pheromone-binding protein, found in Manduca sexta (Tobacco hawkmoth).